Consider the following 552-residue polypeptide: N-acetylglucosamine-6-sulfatase (552 aa).

Positions 1–36 are cleaved as a signal peptide; that stretch reads MRLLPLAPGRLRRGSPRHLPSCSPALLLLVLGGCLG. The Ca(2+) site is built by Asp55, Asp56, and Cys91. Cys91 acts as the Nucleophile in catalysis. 3-oxoalanine (Cys) is present on Cys91. Asn111, Asn117, Asn183, Asn198, Asn210, Asn279, and Asn317 each carry an N-linked (GlcNAc...) asparagine glycan. Ca(2+)-binding residues include Asp326 and Asn327. N-linked (GlcNAc...) asparagine glycosylation is found at Asn362, Asn387, Asn405, Asn422, Asn449, and Asn480. A Phosphoserine modification is found at Ser541.

The protein belongs to the sulfatase family. The cofactor is Ca(2+). The form A (78 kDa) is processed by internal peptidase cleavage to a 32 kDa N-terminal species (form B) and a 48 kDa C-terminal species. In terms of processing, the conversion to 3-oxoalanine (also known as C-formylglycine, FGly), of a serine or cysteine residue in prokaryotes and of a cysteine residue in eukaryotes, is critical for catalytic activity.

The protein resides in the lysosome. It catalyses the reaction Hydrolysis of the 6-sulfate groups of the N-acetyl-D-glucosamine 6-sulfate units of heparan sulfate and keratan sulfate.. Hydrolyzes 6-sulfate groups in N-acetyl-d-glucosaminide units of heparin sulfate and keratan sulfate. This Homo sapiens (Human) protein is N-acetylglucosamine-6-sulfatase (GNS).